A 72-amino-acid polypeptide reads, in one-letter code: Translation initiation factor IF-1 (72 aa).

In terms of domain architecture, S1-like spans 1 to 72; sequence MAKDDVIEVD…DKGRITYRHK (72 aa).

The protein belongs to the IF-1 family. As to quaternary structure, component of the 30S ribosomal translation pre-initiation complex which assembles on the 30S ribosome in the order IF-2 and IF-3, IF-1 and N-formylmethionyl-tRNA(fMet); mRNA recruitment can occur at any time during PIC assembly.

It is found in the cytoplasm. Functionally, one of the essential components for the initiation of protein synthesis. Stabilizes the binding of IF-2 and IF-3 on the 30S subunit to which N-formylmethionyl-tRNA(fMet) subsequently binds. Helps modulate mRNA selection, yielding the 30S pre-initiation complex (PIC). Upon addition of the 50S ribosomal subunit IF-1, IF-2 and IF-3 are released leaving the mature 70S translation initiation complex. The polypeptide is Translation initiation factor IF-1 (Helicobacter hepaticus (strain ATCC 51449 / 3B1)).